Consider the following 551-residue polypeptide: DNA ligase (551 aa).

Glu246 lines the ATP pocket. The active-site N6-AMP-lysine intermediate is Lys248. 6 residues coordinate ATP: Arg253, Arg268, Glu298, Phe337, Arg414, and Lys420.

This sequence belongs to the ATP-dependent DNA ligase family. The cofactor is Mg(2+).

It carries out the reaction ATP + (deoxyribonucleotide)n-3'-hydroxyl + 5'-phospho-(deoxyribonucleotide)m = (deoxyribonucleotide)n+m + AMP + diphosphate.. Functionally, DNA ligase that seals nicks in double-stranded DNA during DNA replication, DNA recombination and DNA repair. This Methanobrevibacter smithii (strain ATCC 35061 / DSM 861 / OCM 144 / PS) protein is DNA ligase.